The chain runs to 208 residues: Outer-membrane lipoprotein carrier protein (208 aa).

The signal sequence occupies residues 1 to 22 (MLKPLSQLVCALPLVVAASSYA).

This sequence belongs to the LolA family. Monomer.

Its subcellular location is the periplasm. In terms of biological role, participates in the translocation of lipoproteins from the inner membrane to the outer membrane. Only forms a complex with a lipoprotein if the residue after the N-terminal Cys is not an aspartate (The Asp acts as a targeting signal to indicate that the lipoprotein should stay in the inner membrane). This is Outer-membrane lipoprotein carrier protein from Shewanella loihica (strain ATCC BAA-1088 / PV-4).